A 515-amino-acid chain; its full sequence is Maturase K (515 aa).

Belongs to the intron maturase 2 family. MatK subfamily.

The protein resides in the plastid. It localises to the chloroplast. In terms of biological role, usually encoded in the trnK tRNA gene intron. Probably assists in splicing its own and other chloroplast group II introns. The polypeptide is Maturase K (Cedrus atlantica (Atlas cedar)).